The sequence spans 379 residues: Dihydroflavonol 4-reductase (379 aa).

NADP(+) contacts are provided by lysine 56 and tyrosine 175.

It belongs to the NAD(P)-dependent epimerase/dehydratase family. Dihydroflavonol-4-reductase subfamily. In terms of tissue distribution, expressed in both leaf and hypocotyl tissues.

It carries out the reaction a (2R,3S,4S)-leucoanthocyanidin + NADP(+) = a (2R,3R)-dihydroflavonol + NADPH + H(+). The enzyme catalyses (2S)-flavan-4-ol + NADP(+) = (2S)-flavanone + NADPH + H(+). It functions in the pathway pigment biosynthesis; anthocyanin biosynthesis. In terms of biological role, bifunctional enzyme involved in flavonoid metabolism. This is Dihydroflavonol 4-reductase from Solanum lycopersicum (Tomato).